Consider the following 227-residue polypeptide: Cytidylate kinase (227 aa).

12 to 20 contacts ATP; it reads GPSGAGKGT.

Belongs to the cytidylate kinase family. Type 1 subfamily.

It is found in the cytoplasm. The enzyme catalyses CMP + ATP = CDP + ADP. It catalyses the reaction dCMP + ATP = dCDP + ADP. This chain is Cytidylate kinase, found in Escherichia fergusonii (strain ATCC 35469 / DSM 13698 / CCUG 18766 / IAM 14443 / JCM 21226 / LMG 7866 / NBRC 102419 / NCTC 12128 / CDC 0568-73).